The sequence spans 257 residues: MALAKRIIPCLDVTAGRVVKGVNFVELRDAGDPVEIARRYDEQGADELTFLDITATSDQRDLILPIIEAVASQVFIPLTVGGGVRAVEDVRRLLNAGADKVSMNSSAVANPQLVRDAADKYGSQCIVVAIDAKRVSADGEAPRWEVFTHGGRKGTGLDAIEWARKMAEFGAGEILLTSMDRDGTKSGFDLALTRGVSDAVPVPVIASGGVGSLQDLADGIKDGRADAVLAASIFHYGEHTVGEAKRFMAEQGIPVRL.

Residues aspartate 12 and aspartate 131 contribute to the active site.

Belongs to the HisA/HisF family. As to quaternary structure, heterodimer of HisH and HisF.

It localises to the cytoplasm. The catalysed reaction is 5-[(5-phospho-1-deoxy-D-ribulos-1-ylimino)methylamino]-1-(5-phospho-beta-D-ribosyl)imidazole-4-carboxamide + L-glutamine = D-erythro-1-(imidazol-4-yl)glycerol 3-phosphate + 5-amino-1-(5-phospho-beta-D-ribosyl)imidazole-4-carboxamide + L-glutamate + H(+). It participates in amino-acid biosynthesis; L-histidine biosynthesis; L-histidine from 5-phospho-alpha-D-ribose 1-diphosphate: step 5/9. IGPS catalyzes the conversion of PRFAR and glutamine to IGP, AICAR and glutamate. The HisF subunit catalyzes the cyclization activity that produces IGP and AICAR from PRFAR using the ammonia provided by the HisH subunit. This chain is Imidazole glycerol phosphate synthase subunit HisF, found in Burkholderia multivorans (strain ATCC 17616 / 249).